A 536-amino-acid chain; its full sequence is Phosphoenolpyruvate carboxykinase (ATP) (536 aa).

Residues Arg-61, Tyr-195, and Lys-201 each contribute to the substrate site. Residues Lys-201, His-220, and 236-244 (GLSGTGKTT) contribute to the ATP site. Residues Lys-201 and His-220 each contribute to the Mn(2+) site. Position 257 (Asp-257) interacts with Mn(2+). Positions 285, 322, and 447 each coordinate ATP. Position 322 (Arg-322) interacts with substrate.

Belongs to the phosphoenolpyruvate carboxykinase (ATP) family. The cofactor is Mn(2+).

It localises to the cytoplasm. It catalyses the reaction oxaloacetate + ATP = phosphoenolpyruvate + ADP + CO2. The protein operates within carbohydrate biosynthesis; gluconeogenesis. Functionally, involved in the gluconeogenesis. Catalyzes the conversion of oxaloacetate (OAA) to phosphoenolpyruvate (PEP) through direct phosphoryl transfer between the nucleoside triphosphate and OAA. The chain is Phosphoenolpyruvate carboxykinase (ATP) from Chelativorans sp. (strain BNC1).